The sequence spans 250 residues: 5-oxoprolinase subunit A (250 aa).

Belongs to the LamB/PxpA family. As to quaternary structure, forms a complex composed of PxpA, PxpB and PxpC.

The catalysed reaction is 5-oxo-L-proline + ATP + 2 H2O = L-glutamate + ADP + phosphate + H(+). Functionally, catalyzes the cleavage of 5-oxoproline to form L-glutamate coupled to the hydrolysis of ATP to ADP and inorganic phosphate. The protein is 5-oxoprolinase subunit A of Klebsiella pneumoniae (strain 342).